The sequence spans 93 residues: MTKSELIEKLIALNPSLPEKAVEDGVKDILENIMLTLEQAKRVEIRGFGSFSLHYRQPRIGRNPKTGASVKLDAKYVPHFKAGKDLKERVDLV.

This sequence belongs to the bacterial histone-like protein family. In terms of assembly, heterodimer of an alpha and a beta chain.

This protein is one of the two subunits of integration host factor, a specific DNA-binding protein that functions in genetic recombination as well as in transcriptional and translational control. The chain is Integration host factor subunit beta from Haemophilus ducreyi (strain 35000HP / ATCC 700724).